The following is a 969-amino-acid chain: Translation initiation factor IF-2 (969 aa).

Positions lysine 96 to arginine 377 are disordered. Low complexity-rich tracts occupy residues alanine 105–proline 157, alanine 167–lysine 181, and proline 216–proline 252. Basic and acidic residues predominate over residues aspartate 253–glutamate 264. A compositionally biased stretch (gly residues) spans arginine 357–glycine 366. A tr-type G domain is found at proline 470–glutamate 637. Residues glycine 479–threonine 486 are G1. Glycine 479–threonine 486 is a binding site for GTP. The tract at residues glycine 504–histidine 508 is G2. Residues aspartate 525–glycine 528 are G3. GTP is bound by residues aspartate 525–histidine 529 and asparagine 579–aspartate 582. The interval asparagine 579–aspartate 582 is G4. Residues serine 615–lysine 617 are G5.

This sequence belongs to the TRAFAC class translation factor GTPase superfamily. Classic translation factor GTPase family. IF-2 subfamily.

The protein localises to the cytoplasm. In terms of biological role, one of the essential components for the initiation of protein synthesis. Protects formylmethionyl-tRNA from spontaneous hydrolysis and promotes its binding to the 30S ribosomal subunits. Also involved in the hydrolysis of GTP during the formation of the 70S ribosomal complex. The chain is Translation initiation factor IF-2 from Bordetella parapertussis (strain 12822 / ATCC BAA-587 / NCTC 13253).